A 435-amino-acid chain; its full sequence is UPF0597 protein AHA_4077 (435 aa).

It belongs to the UPF0597 family.

The sequence is that of UPF0597 protein AHA_4077 from Aeromonas hydrophila subsp. hydrophila (strain ATCC 7966 / DSM 30187 / BCRC 13018 / CCUG 14551 / JCM 1027 / KCTC 2358 / NCIMB 9240 / NCTC 8049).